Consider the following 591-residue polypeptide: Negative elongation factor D (591 aa).

The segment at 1 to 44 (MAGPAPGTIMGEDYFGNASEWGEEADGGQHQEDDSGEGEDDAEV) is disordered. The span at 34-44 (DSGEGEDDAEV) shows a compositional bias: acidic residues.

The protein belongs to the NELF-D family. As to quaternary structure, the NELF complex is composed of NELFA, NELFB, NELFCD and NELFE; NELFA and NELFCD form a stable subcomplex that binds primarily through NELFCD to the N-terminus of NELFB. Binds RNA which may help to stabilize the NELF complex on nucleic acid. In vitro, the NELFA:NELFCD subcomplex binds to ssDNA and ssRNA in a sequence- and structure-dependent manner. Interacts with ARAF1. Interacts with PCF11. Interacts with NELFB. Interacts with KAT8.

The protein resides in the nucleus. Its function is as follows. Essential component of the NELF complex, a complex that negatively regulates the elongation of transcription by RNA polymerase II. The NELF complex, which acts via an association with the DSIF complex and causes transcriptional pausing, is counteracted by the P-TEFb kinase complex. This chain is Negative elongation factor D (Nelfcd), found in Mus musculus (Mouse).